Consider the following 148-residue polypeptide: Large ribosomal subunit protein bL9 (148 aa).

It belongs to the bacterial ribosomal protein bL9 family.

Functionally, binds to the 23S rRNA. The protein is Large ribosomal subunit protein bL9 of Thermus thermophilus.